A 40-amino-acid chain; its full sequence is Submaxillary gland androgen-regulated protein 2, isoform epsilon (40 aa).

Positions 1–20 (MKALYMVFVLWVLIGCFLRC) are cleaved as a signal peptide.

The protein resides in the secreted. In terms of biological role, may play a role in protection or detoxification. In Mus musculus (Mouse), this protein is Submaxillary gland androgen-regulated protein 2, isoform epsilon (Smr2).